A 419-amino-acid polypeptide reads, in one-letter code: Gamma-glutamyl phosphate reductase (419 aa).

The protein belongs to the gamma-glutamyl phosphate reductase family.

Its subcellular location is the cytoplasm. It carries out the reaction L-glutamate 5-semialdehyde + phosphate + NADP(+) = L-glutamyl 5-phosphate + NADPH + H(+). It functions in the pathway amino-acid biosynthesis; L-proline biosynthesis; L-glutamate 5-semialdehyde from L-glutamate: step 2/2. Catalyzes the NADPH-dependent reduction of L-glutamate 5-phosphate into L-glutamate 5-semialdehyde and phosphate. The product spontaneously undergoes cyclization to form 1-pyrroline-5-carboxylate. In Bordetella bronchiseptica (strain ATCC BAA-588 / NCTC 13252 / RB50) (Alcaligenes bronchisepticus), this protein is Gamma-glutamyl phosphate reductase.